The following is a 202-amino-acid chain: Coiled-coil domain-containing protein mdt-28 (202 aa).

2 stretches are compositionally biased toward acidic residues: residues Met1 to Glu15 and Glu28 to Tyr45. Residues Met1–Pro83 are disordered. The stretch at Ile159–Ser184 forms a coiled coil.

In terms of assembly, interacts with mdt-6 and mdt-30. Ubiquitously expressed in tissues including epidermal, intestinal, pharyngeal and uterine, and is also expressed in vulval muscle cells and gut granules.

Its subcellular location is the nucleus. It is found in the cytoplasm. Functionally, plays a role in normal growth and development. This chain is Coiled-coil domain-containing protein mdt-28, found in Caenorhabditis elegans.